The primary structure comprises 354 residues: Rhodopsin (354 aa).

Residues 1 to 36 (MNGTEGPNFYIPMSNKTGVVRSPFDYPQYYLAEPWK) lie on the Extracellular side of the membrane. Residue Asn-2 is glycosylated (N-linked (GlcNAc...) (hybrid) asparagine). An N-linked (GlcNAc...) asparagine glycan is attached at Asn-15. A helical transmembrane segment spans residues 37–61 (YSVLAAYMFLLILLGLPINFMTLYV). Topologically, residues 62–73 (TIQHKKLRTPLN) are cytoplasmic. A helical membrane pass occupies residues 74 to 96 (YILLNLGVCNHFMVLCGFTITMY). Topologically, residues 97 to 110 (TSLHGYFVFGQTGC) are extracellular. Residues Cys-110 and Cys-187 are joined by a disulfide bond. A helical transmembrane segment spans residues 111-133 (YFEGFFATLGGEIALWSLVVLAI). A 'Ionic lock' involved in activated form stabilization motif is present at residues 134 to 136 (ERY). The Cytoplasmic portion of the chain corresponds to 134–152 (ERYIVVCKPMSNFRFGENH). A helical transmembrane segment spans residues 153 to 173 (AMMGVAFTWIMALACAVPPLF). Residues 174 to 202 (GWSRYIPEGMQCSCGVDYYTLKPEVNNES) lie on the Extracellular side of the membrane. A helical transmembrane segment spans residues 203-224 (FVIYMFVVHFLIPLIIISFCYG). Residues 225–252 (RLVCTVKEAAAQQQESATTQKAEKEVTR) are Cytoplasmic-facing. A helical membrane pass occupies residues 253-274 (MVIIMVIFFLICWVPYAYVAFY). Residues 275–286 (IFTHQGSEFGPI) lie on the Extracellular side of the membrane. The chain crosses the membrane as a helical span at residues 287–308 (FMTVPAFFAKSSAIYNPVIYIM). Lys-296 is modified (N6-(retinylidene)lysine). At 309–354 (LNKQFRNCMITTLCCGKNPFGDDDASSAATSKTEATSVSTSQVSPA) the chain is on the cytoplasmic side. S-palmitoyl cysteine attachment occurs at residues Cys-322 and Cys-323. The disordered stretch occupies residues 332-354 (DASSAATSKTEATSVSTSQVSPA). A compositionally biased stretch (low complexity) spans 334–354 (SSAATSKTEATSVSTSQVSPA).

This sequence belongs to the G-protein coupled receptor 1 family. Opsin subfamily. Contains one covalently linked retinal chromophore. Upon light absorption, the covalently bound 11-cis-retinal is converted to all-trans-retinal. After hydrolysis of the Schiff base and release of the covalently bound all-trans-retinal, active rhodopsin is regenerated by binding of a fresh molecule of 11-cis-retinal. Detected in retina rod photoreceptor cell outer segments (at protein level). Detected in retina.

It localises to the membrane. It is found in the cell projection. The protein localises to the cilium. Its subcellular location is the photoreceptor outer segment. Photoreceptor required for image-forming vision at low light intensity. Required for photoreceptor cell viability after birth. Light-induced isomerization of 11-cis to all-trans retinal triggers a conformational change that activates signaling via G-proteins. Subsequent receptor phosphorylation mediates displacement of the bound G-protein alpha subunit by arrestin and terminates signaling. In Lithobates pipiens (Northern leopard frog), this protein is Rhodopsin (RHO).